The sequence spans 312 residues: Cytochrome f (312 aa).

Residues 1-30 (MYLSKNFFLNLKTFIFSFFVLCFFSQSAQA) form the signal peptide. Y31, C51, C54, and H55 together coordinate heme. A helical membrane pass occupies residues 278 to 298 (VQGLLLFSLFILLAQIFLVLK).

This sequence belongs to the cytochrome f family. As to quaternary structure, the 4 large subunits of the cytochrome b6-f complex are cytochrome b6, subunit IV (17 kDa polypeptide, petD), cytochrome f and the Rieske protein, while the 4 small subunits are PetG, PetL, PetM and PetN. The complex functions as a dimer. The cofactor is heme.

The protein localises to the plastid. It localises to the chloroplast thylakoid membrane. Component of the cytochrome b6-f complex, which mediates electron transfer between photosystem II (PSII) and photosystem I (PSI), cyclic electron flow around PSI, and state transitions. The protein is Cytochrome f (petA) of Bigelowiella natans (Pedinomonas minutissima).